Here is a 349-residue protein sequence, read N- to C-terminus: tRNA pseudouridine synthase D (349 aa).

Phe-27 provides a ligand contact to substrate. Asp-80 acts as the Nucleophile in catalysis. Substrate is bound at residue Asn-129. Residues 155-303 form the TRUD domain; that stretch reads GVPNYFGAQR…VEAARRAMLL (149 aa). Residue Phe-329 coordinates substrate.

It belongs to the pseudouridine synthase TruD family.

It carries out the reaction uridine(13) in tRNA = pseudouridine(13) in tRNA. Its function is as follows. Responsible for synthesis of pseudouridine from uracil-13 in transfer RNAs. The polypeptide is tRNA pseudouridine synthase D (Escherichia coli O9:H4 (strain HS)).